The following is a 1738-amino-acid chain: Interaptin (1738 aa).

Residues 1-248 (MEHSTPLNEE…TYISLFPKVY (248 aa)) form an actin-binding region. At 1–1705 (MEHSTPLNEE…RIFPSKNTRP (1705 aa)) the chain is on the cytoplasmic side. Calponin-homology (CH) domains follow at residues 22–128 (IAQK…LRYQ) and 146–249 (TKPS…KVYQ). Disordered regions lie at residues 285–350 (SKST…SNLS), 1068–1090 (IQQLQSQLNEQRQQQSNQLSEKD), and 1589–1627 (LQQQKQQQQQPPTASSSPSSSPSLLSSTPTPKPQRPNQI). Residues 292-301 (QQNQQQQQQN) show a composition bias toward low complexity. A compositionally biased stretch (polar residues) spans 302 to 316 (LLSPNSYRNSISFSK). Composition is skewed to low complexity over residues 317 to 344 (SPSFEGSQSTGSSRSISPISSPIKNSTT), 1068 to 1086 (IQQLQSQLNEQRQQQSNQL), and 1589 to 1617 (LQQQKQQQQQPPTASSSPSSSPSLLSSTP). Positions 373–1598 (EESRVIEKIV…LQQQKQQQQQ (1226 aa)) form a coiled coil. The helical; Anchor for type IV membrane protein transmembrane segment at 1706–1726 (IFDWRALFFIGAAVLAISTLF) threads the bilayer.

It belongs to the alpha-actinin family.

Its subcellular location is the nucleus membrane. It localises to the endoplasmic reticulum membrane. The protein resides in the golgi apparatus. It is found in the golgi stack membrane. The protein localises to the cytoplasm. Its subcellular location is the cytoskeleton. It localises to the microtubule organizing center. The protein resides in the centrosome. In terms of biological role, may function as linker between cellular membranes and the actin cytoskeleton. Required for normal development of fruiting bodies. In Dictyostelium discoideum (Social amoeba), this protein is Interaptin (abpD).